We begin with the raw amino-acid sequence, 358 residues long: Arginine kinase (358 aa).

In terms of domain architecture, Phosphagen kinase N-terminal spans 2 to 84 (SDADLFSKLD…LDEVIKDYHK (83 aa)). A substrate-binding site is contributed by 57-61 (GVGIY). In terms of domain architecture, Phosphagen kinase C-terminal spans 112 to 350 (FIVSTRVRVG…EEILKREKEL (239 aa)). Residues 115 to 119 (STRVR) and His-178 each bind ATP. Position 218 (Glu-218) interacts with substrate. Arg-222 lines the ATP pocket. Cys-265 is a binding site for substrate. ATP contacts are provided by residues 274–278 (RASVH) and 303–308 (RGIHGE). Glu-308 serves as a coordination point for substrate.

Belongs to the ATP:guanido phosphotransferase family.

It carries out the reaction L-arginine + ATP = N(omega)-phospho-L-arginine + ADP + H(+). In Turbo cornutus (Horned turban), this protein is Arginine kinase.